A 580-amino-acid chain; its full sequence is M-phase inducer phosphatase 2 (580 aa).

Residues 1–24 are disordered; it reads MEVPQPEPAPGSALSPAGVCGGAQ. Residue Ser-42 is modified to Phosphoserine. A compositionally biased stretch (low complexity) spans 89–107; the sequence is SLSRRASESSLSSESSESS. Disordered stretches follow at residues 89–117 and 165–196; these read SLSR…DSPS and NITN…ENDG. Ser-169 is modified (phosphoserine; by MELK). The residue at position 249 (Ser-249) is a Phosphoserine. Ser-323 is subject to Phosphoserine; by MELK and MAPK14. The interval 331-370 is disordered; sequence PILKRLERPQDRDTPVQNKRRRSVTPPEEQQEAEEPKARV. Residues 334 to 344 show a composition bias toward basic and acidic residues; it reads KRLERPQDRDT. A Phosphoserine; by AURKA modification is found at Ser-353. At Ser-375 the chain carries Phosphoserine; by BRSK1 and MAPK14. One can recognise a Rhodanese domain in the interval 431 to 538; that stretch reads IVDKFVIVDC…FFPQHPNFCE (108 aa). Ser-470 carries the post-translational modification Phosphoserine. Cys-487 is a catalytic residue. Ser-563 is modified (phosphoserine).

The protein belongs to the MPI phosphatase family. As to quaternary structure, interacts with MAPK14 and 14-3-3 proteins. Post-translationally, phosphorylated by BRSK1 in vitro. Phosphorylated by CHEK1, which inhibits the activity of this protein. Phosphorylation at Ser-353 by AURKA might locally participate in the control of the onset of mitosis. Phosphorylation by MELK at Ser-169 promotes localization to the centrosome and the spindle poles during mitosis. Phosphorylation at Ser-323 and Ser-375 by MAPK14 is required for binding to 14-3-3 proteins.

It localises to the cytoplasm. It is found in the cytoskeleton. The protein localises to the microtubule organizing center. The protein resides in the centrosome. Its subcellular location is the spindle pole. The enzyme catalyses O-phospho-L-tyrosyl-[protein] + H2O = L-tyrosyl-[protein] + phosphate. Stimulated by B-type cyclins. Functionally, tyrosine protein phosphatase which functions as a dosage-dependent inducer of mitotic progression. Directly dephosphorylates CDK1 and stimulates its kinase activity. Required for G2/M phases of the cell cycle progression and abscission during cytokinesis in a ECT2-dependent manner. The three isoforms seem to have a different level of activity. In Homo sapiens (Human), this protein is M-phase inducer phosphatase 2 (CDC25B).